The following is a 519-amino-acid chain: Bifunctional NAD(P)H-hydrate repair enzyme Nnr (519 aa).

The NAD(P)H-hydrate epimerase stretch occupies residues 1–233 (MMRCGEGYPG…DIGIPPAAEI (233 aa)). The YjeF N-terminal domain occupies 25 to 233 (MAAADINAEY…DIGIPPAAEI (209 aa)). Positions 71 to 75 (GNGGD) are NADPHX 1; for epimerase activity. Residues Asn72 and Asp144 each contribute to the K(+) site. The tract at residues 148-154 (GTGVRGS) is NADPHX 1; for epimerase activity. Position 177 (Asp177) interacts with (6S)-NADPHX. Residue Ser180 participates in K(+) binding. The region spanning 235–515 (MGPGDLLRIP…DMIPSVMDPG (281 aa)) is the YjeF C-terminal domain. Residues 235-519 (MGPGDLLRIP…SVMDPGFYGF (285 aa)) form an ADP-dependent (S)-NAD(P)H-hydrate dehydratase region. Residue Gly338 coordinates (6S)-NADPHX. The segment at 389–395 (HMAEFSS) is NADPHX 2; for dehydratase activity. Residues 428-432 (KGRID) and 447-456 (CPGMTVGGTG) contribute to the ADP site. A (6S)-NADPHX-binding site is contributed by Asp457.

In the N-terminal section; belongs to the NnrE/AIBP family. The protein in the C-terminal section; belongs to the NnrD/CARKD family. K(+) serves as cofactor.

It carries out the reaction (6S)-NADHX + ADP = AMP + phosphate + NADH + H(+). It catalyses the reaction (6S)-NADPHX + ADP = AMP + phosphate + NADPH + H(+). The enzyme catalyses (6R)-NADHX = (6S)-NADHX. The catalysed reaction is (6R)-NADPHX = (6S)-NADPHX. Its function is as follows. Bifunctional enzyme that catalyzes the epimerization of the S- and R-forms of NAD(P)HX and the dehydration of the S-form of NAD(P)HX at the expense of ADP, which is converted to AMP. This allows the repair of both epimers of NAD(P)HX, a damaged form of NAD(P)H that is a result of enzymatic or heat-dependent hydration. This Methanothermobacter thermautotrophicus (strain ATCC 29096 / DSM 1053 / JCM 10044 / NBRC 100330 / Delta H) (Methanobacterium thermoautotrophicum) protein is Bifunctional NAD(P)H-hydrate repair enzyme Nnr (nnr).